Consider the following 338-residue polypeptide: RNA 3'-terminal phosphate cyclase (338 aa).

ATP contacts are provided by residues Gln103 and 283–287 (YLADQ). His308 acts as the Tele-AMP-histidine intermediate in catalysis.

The protein belongs to the RNA 3'-terminal cyclase family. Type 1 subfamily.

The protein localises to the cytoplasm. It carries out the reaction a 3'-end 3'-phospho-ribonucleotide-RNA + ATP = a 3'-end 2',3'-cyclophospho-ribonucleotide-RNA + AMP + diphosphate. In terms of biological role, catalyzes the conversion of 3'-phosphate to a 2',3'-cyclic phosphodiester at the end of RNA. The mechanism of action of the enzyme occurs in 3 steps: (A) adenylation of the enzyme by ATP; (B) transfer of adenylate to an RNA-N3'P to produce RNA-N3'PP5'A; (C) and attack of the adjacent 2'-hydroxyl on the 3'-phosphorus in the diester linkage to produce the cyclic end product. The biological role of this enzyme is unknown but it is likely to function in some aspects of cellular RNA processing. This is RNA 3'-terminal phosphate cyclase from Escherichia coli O139:H28 (strain E24377A / ETEC).